The following is a 310-amino-acid chain: uncharacterized protein (310 aa).

2 disordered regions span residues 22–163 (LARQ…PVEH) and 178–209 (EAEA…VEGD). Composition is skewed to basic and acidic residues over residues 56 to 66 (IIRDDHHHAGP) and 183 to 197 (TEVR…ERHA). Low complexity predominate over residues 198–209 (AAAAAGTDVEGD). 3 helical membrane passes run 231 to 251 (ALVV…FIAF), 257 to 277 (WNSI…VVSV), and 286 to 306 (IAST…PLAL).

This sequence to M.leprae ML2433.

The protein resides in the cell membrane. This is an uncharacterized protein from Mycobacterium tuberculosis (strain CDC 1551 / Oshkosh).